Here is a 230-residue protein sequence, read N- to C-terminus: Uracil-DNA glycosylase (230 aa).

Residue aspartate 71 is the Proton acceptor of the active site.

The protein belongs to the uracil-DNA glycosylase (UDG) superfamily. UNG family.

It is found in the cytoplasm. The enzyme catalyses Hydrolyzes single-stranded DNA or mismatched double-stranded DNA and polynucleotides, releasing free uracil.. Its function is as follows. Excises uracil residues from the DNA which can arise as a result of misincorporation of dUMP residues by DNA polymerase or due to deamination of cytosine. The polypeptide is Uracil-DNA glycosylase (Tropheryma whipplei (strain TW08/27) (Whipple's bacillus)).